The chain runs to 54 residues: UPF0391 membrane protein Mpe_A2904 (54 aa).

2 helical membrane-spanning segments follow: residues 5 to 25 (AVVFFIIALIAAVFGFGGIAA) and 30 to 50 (IAKILFFVFVVLAVASFLFGL).

Belongs to the UPF0391 family.

It localises to the cell membrane. The polypeptide is UPF0391 membrane protein Mpe_A2904 (Methylibium petroleiphilum (strain ATCC BAA-1232 / LMG 22953 / PM1)).